A 2000-amino-acid chain; its full sequence is E3 ubiquitin-protein ligase TTC3 (2000 aa).

Residues 20 to 249 (MDDFAEGGLS…RHSCMQCVKQ (230 aa)) are interaction with POLG. 2 TPR repeats span residues 250 to 283 (GELM…RPEN) and 284 to 317 (HLLY…KNTW). A Phosphoserine modification is found at Ser397. A disordered region spans residues 442–478 (CDCHPEFLPPPSQPPRHKGKQKSRNNESEKPSSNSQV). 2 TPR repeats span residues 556–592 (VLVV…YPNE) and 596–629 (CLAY…ICRL). The segment at 804 to 828 (AQERMEEDLRESNPPKPEEPEETVE) is disordered. Phosphoserine is present on Ser1029. Disordered stretches follow at residues 1041–1087 (NKGK…GPFA), 1233–1308 (FQPD…PEDA), 1423–1448 (QSST…SSDS), 1806–1839 (LEVK…QSQK), and 1894–1947 (EEQK…VPAP). Polar residues predominate over residues 1059 to 1070 (GTASVTPSSETV). Phosphoserine is present on Ser1080. The span at 1268 to 1277 (DSDSSSGSAS) shows a compositional bias: low complexity. A compositionally biased stretch (polar residues) spans 1829–1839 (GQATRSSQSQK). Over residues 1894 to 1911 (EEQKKKKPNPGKDKKTSE) the composition is skewed to basic and acidic residues. Positions 1912–1934 (AHPAASVSKSSPSPPLAAAGPSA) are enriched in low complexity. The segment at 1952-1991 (CQICHEIFKSKNMRVLKCGHKFHKGCFKQWLKGQSTCPTC) adopts an RING-type; atypical zinc-finger fold.

As to quaternary structure, interacts (when phosphorylated on Ser-397) with AKT1, AKT2 and AKT3 (when phosphorylated). Interacts with CIT. Interacts with POLG. Interacts with HSP70. Interacts with SMURF2. Post-translationally, phosphorylation on Ser-397 by Akt is required for ubiquitin ligase activity. In terms of processing, proteolytically cleaved into differently sized N- and C-terminal fragments.

It localises to the nucleus. The protein resides in the cytoplasm. Its subcellular location is the golgi apparatus. It carries out the reaction S-ubiquitinyl-[E2 ubiquitin-conjugating enzyme]-L-cysteine + [acceptor protein]-L-lysine = [E2 ubiquitin-conjugating enzyme]-L-cysteine + N(6)-ubiquitinyl-[acceptor protein]-L-lysine.. The protein operates within protein modification; protein ubiquitination. Functionally, E3 ubiquitin-protein ligase which catalyzes the formation of 'Lys-48'-polyubiquitin chains. Mediates the ubiquitination and subsequent degradation of phosphorylated Akt (AKT1, AKT2 and AKT3) in the nucleus. Acts as a terminal regulator of Akt signaling after activation; its phosphorylation by Akt, which is a prerequisite for ubiquitin ligase activity, suggests the existence of a regulation mechanism required to control Akt levels after activation. Positively regulates TGFB1-induced epithelial-mesenchymal transition and myofibroblast differentiation by mediating the ubiquitination and subsequent degradation of SMURF2. Regulates neuronal differentiation by regulating actin remodeling and Golgi organization via a signaling cascade involving RHOA, CIT and ROCK. Inhibits cell proliferation. This chain is E3 ubiquitin-protein ligase TTC3, found in Rattus norvegicus (Rat).